The primary structure comprises 149 residues: MAEQLTEEQIAEFKEAFALFDKDGDGTITTKELGTVMRSLGQNPTEAELQDMINEVDADGNGTIDFPEFLSLMARKMKEQDSEEELIEAFKVFDRDGNGLISAAELRHVMTNLGEKLTDDEVDEMIREADIDGDGHINYEEFVRMMVSK.

The residue at position 2 (A2) is an N-acetylalanine. EF-hand domains are found at residues 8–43 (EQIA…LGQN), 44–79 (PTEA…KMKE), 81–116 (DSEE…LGEK), and 117–149 (LTDD…MVSK). Position 14 is an N6,N6-dimethyllysine (K14). Residues D21, D23, D25, T27, E32, D57, D59, N61, T63, E68, D94, D96, N98, and E105 each contribute to the Ca(2+) site. K116 is subject to N6,N6,N6-trimethyllysine. Ca(2+) is bound by residues D130, D132, D134, H136, and E141.

This sequence belongs to the calmodulin family. The pantophobiac mutant CAM2 is undermethylated on Lys-116.

In terms of biological role, calmodulin mediates the control of a large number of enzymes, ion channels and other proteins by Ca(2+). Among the enzymes to be stimulated by the calmodulin-Ca(2+) complex are a number of protein kinases and phosphatases. The polypeptide is Calmodulin (CAM) (Paramecium tetraurelia).